The primary structure comprises 488 residues: Acetyl-coenzyme A carboxylase carboxyl transferase subunit beta, chloroplastic (488 aa).

The disordered stretch occupies residues 189–211 (ISGSDSGSSNIRTDGNGSDIRGR). One can recognise a CoA carboxyltransferase N-terminal domain in the interval 224–488 (LWVQCENCYG…LHGFFPLTQN (265 aa)). Residues Cys228, Cys231, Cys247, and Cys250 each contribute to the Zn(2+) site. Residues 228-250 (CENCYGLNYKKFFKSKMNICEQC) form a C4-type zinc finger.

This sequence belongs to the AccD/PCCB family. As to quaternary structure, acetyl-CoA carboxylase is a heterohexamer composed of biotin carboxyl carrier protein, biotin carboxylase and 2 subunits each of ACCase subunit alpha and ACCase plastid-coded subunit beta (accD). The cofactor is Zn(2+).

It is found in the plastid. The protein localises to the chloroplast stroma. The enzyme catalyses N(6)-carboxybiotinyl-L-lysyl-[protein] + acetyl-CoA = N(6)-biotinyl-L-lysyl-[protein] + malonyl-CoA. Its pathway is lipid metabolism; malonyl-CoA biosynthesis; malonyl-CoA from acetyl-CoA: step 1/1. Functionally, component of the acetyl coenzyme A carboxylase (ACC) complex. Biotin carboxylase (BC) catalyzes the carboxylation of biotin on its carrier protein (BCCP) and then the CO(2) group is transferred by the transcarboxylase to acetyl-CoA to form malonyl-CoA. The polypeptide is Acetyl-coenzyme A carboxylase carboxyl transferase subunit beta, chloroplastic (Liriodendron tulipifera (Tuliptree)).